A 291-amino-acid chain; its full sequence is Quinol oxidase subunit 2 (291 aa).

The signal sequence occupies residues 1–28; it reads MQLKKAFWKLASLLPLSLLLFLGGCDKK. 2 consecutive transmembrane segments (helical) span residues 49–69 and 91–111; these read SFLL…VILI and LEII…IPTV.

This sequence belongs to the cytochrome c oxidase subunit 2 family.

It localises to the cell membrane. It carries out the reaction 2 a quinol + O2 = 2 a quinone + 2 H2O. Its function is as follows. Catalyzes quinol oxidation with the concomitant reduction of oxygen to water. Subunit II transfers the electrons from a quinol to the binuclear center of the catalytic subunit I. The sequence is that of Quinol oxidase subunit 2 from Bacillus anthracis.